A 442-amino-acid polypeptide reads, in one-letter code: Ribosome biogenesis protein NOP53 (442 aa).

A disordered region spans residues 242–264 (KPSSNTNLKKIEDKTPRQAQKSV).

This sequence belongs to the NOP53 family.

It localises to the nucleus. It is found in the nucleolus. The protein resides in the nucleoplasm. May play a role in ribosome biogenesis. This Arabidopsis thaliana (Mouse-ear cress) protein is Ribosome biogenesis protein NOP53.